The sequence spans 185 residues: Isopentenyl-diphosphate Delta-isomerase (185 aa).

His27 and His34 together coordinate Mn(2+). In terms of domain architecture, Nudix hydrolase spans 32 to 168 (PLHLAFSCHL…PWAFSPWLTL (137 aa)). Residue Cys69 is part of the active site. Mg(2+) is bound at residue Cys69. His71 provides a ligand contact to Mn(2+). Glu89 is a Mg(2+) binding site. Mn(2+) contacts are provided by Glu118 and Glu120. Residue Glu120 is part of the active site.

This sequence belongs to the IPP isomerase type 1 family. Mg(2+) is required as a cofactor. The cofactor is Mn(2+).

It localises to the cytoplasm. The enzyme catalyses isopentenyl diphosphate = dimethylallyl diphosphate. The protein operates within isoprenoid biosynthesis; dimethylallyl diphosphate biosynthesis; dimethylallyl diphosphate from isopentenyl diphosphate: step 1/1. In terms of biological role, catalyzes the 1,3-allylic rearrangement of the homoallylic substrate isopentenyl (IPP) to its highly electrophilic allylic isomer, dimethylallyl diphosphate (DMAPP). This Leifsonia xyli subsp. xyli (strain CTCB07) protein is Isopentenyl-diphosphate Delta-isomerase.